A 237-amino-acid chain; its full sequence is Small ribosomal subunit protein eS4 (237 aa).

Positions 37-100 (IPLAVLLRDV…NEYYRIIPDP (64 aa)) constitute an S4 RNA-binding domain.

It belongs to the eukaryotic ribosomal protein eS4 family.

This chain is Small ribosomal subunit protein eS4, found in Caldivirga maquilingensis (strain ATCC 700844 / DSM 13496 / JCM 10307 / IC-167).